We begin with the raw amino-acid sequence, 219 residues long: Protein ERP1 (219 aa).

Positions 1-22 are cleaved as a signal peptide; the sequence is MLLTSLLQVFACCLVLPAQVTA. The Lumenal portion of the chain corresponds to 23 to 186; sequence FYYYTSGAER…RDASEAVNSR (164 aa). The 100-residue stretch at 32–131 folds into the GOLD domain; sequence RKCFHKELSK…KTKIDVEFQV (100 aa). Residues 187–207 form a helical membrane-spanning segment; that stretch reads AMWWIVIQLIVLAVTCGWQMK. Residues 208-219 are Cytoplasmic-facing; it reads HLGKFFVKQKIL.

Belongs to the EMP24/GP25L family. As to quaternary structure, associates with EMP24, ERV25 and ERP2.

Its subcellular location is the endoplasmic reticulum membrane. Its function is as follows. Involved in vesicular protein trafficking. This Saccharomyces cerevisiae (strain ATCC 204508 / S288c) (Baker's yeast) protein is Protein ERP1 (ERP1).